A 697-amino-acid polypeptide reads, in one-letter code: uncharacterized protein (697 aa).

Residues 516 to 545 are a coiled coil; the sequence is ADQSQNDVVALSSRIDRLTQEVVALQNSEK.

This is an uncharacterized protein from Callospermophilus lateralis (Golden-mantled ground squirrel).